The following is a 256-amino-acid chain: Small ribosomal subunit protein uS2 (256 aa).

This sequence belongs to the universal ribosomal protein uS2 family.

This is Small ribosomal subunit protein uS2 from Geotalea uraniireducens (strain Rf4) (Geobacter uraniireducens).